The primary structure comprises 841 residues: uncharacterized protein (841 aa).

An N-terminal signal peptide occupies residues methionine 1–alanine 31.

It is found in the secreted. This is an uncharacterized protein from Schizosaccharomyces pombe (strain 972 / ATCC 24843) (Fission yeast).